Consider the following 197-residue polypeptide: Probable UbiX-like flavin prenyltransferase (197 aa).

Residues 9 to 11 (GAT), S36, 87 to 90 (SMKT), and R122 contribute to the FMN site.

The protein belongs to the UbiX/PAD1 family. YclB subfamily. In terms of assembly, homododecamer.

The catalysed reaction is dimethylallyl phosphate + FMNH2 = prenylated FMNH2 + phosphate. In terms of biological role, flavin prenyltransferase that catalyzes the synthesis of the prenylated FMN cofactor (prenyl-FMN) for phenolic acid decarboxylase C. Involved in the decarboxylation and detoxification of phenolic derivatives under both aerobic and anaerobic conditions. This is Probable UbiX-like flavin prenyltransferase (ecdB) from Escherichia coli.